The primary structure comprises 389 residues: Large envelope protein (389 aa).

Methionine 1 is subject to N-acetylmethionine. Glycine 2 carries N-myristoyl glycine; by host lipidation. The interval 2-108 (GTNLSVPNPL…PPLRDSHPQA (107 aa)) is pre-S1. The segment at 2–163 (GTNLSVPNPL…SSRTGDPALN (162 aa)) is pre-S. Topologically, residues 2–170 (GTNLSVPNPL…ALNMENITSG (169 aa)) are virion surface; in external conformation. Over 2–242 (GTNLSVPNPL…PGYRWMCLRR (241 aa)) the chain is Intravirion; in internal conformation. The disordered stretch occupies residues 79 to 103 (TVPPTASTNRQSGRQPTPISPPLRD). The span at 84-95 (ASTNRQSGRQPT) shows a compositional bias: polar residues. The pre-S2 stretch occupies residues 109 to 163 (MQWNSTALHQALQDPRVRGLYFPAGGSSSGTLNPVPNTASHISSISSRTGDPALN). A helical transmembrane segment spans residues 171–191 (FLGPLLVLQAGFFLLTRILTI). Over 192–242 (PQSLDSWWTSLNFLGGSPVCLGQNSQYPTSNHSPTSCPPICPGYRWMCLRR) the chain is Intravirion; in external conformation. The chain crosses the membrane as a helical span at residues 243–263 (FIIFLFILLLCLIFLLVLLDY). Topologically, residues 264-337 (QGMLPVCPLI…WASVRFSWLS (74 aa)) are virion surface. Asparagine 309 is a glycosylation site (N-linked (GlcNAc...) asparagine; by host). The helical transmembrane segment at 338–358 (LLVPFVQWFVGLSPTVWLSVI) threads the bilayer. Residues 359–364 (WMMWYW) lie on the Intravirion side of the membrane. The helical transmembrane segment at 365 to 387 (GPSLYNIVSPFIPLLPIFFCLWV) threads the bilayer. Residues 388–389 (YI) lie on the Virion surface side of the membrane.

This sequence belongs to the orthohepadnavirus major surface antigen family. In terms of assembly, in its internal form (Li-HBsAg), interacts with the capsid protein and with the isoform S. Interacts with host chaperone CANX. As to quaternary structure, associates with host chaperone CANX through its pre-S2 N glycan; this association may be essential for isoform M proper secretion. Interacts with isoform L. Interacts with the antigens of satellite virus HDV (HDVAgs); this interaction is required for encapsidation of HDV genomic RNA. Isoform M is N-terminally acetylated by host at a ratio of 90%, and N-glycosylated by host at the pre-S2 region. Post-translationally, myristoylated.

The protein localises to the virion membrane. The large envelope protein exists in two topological conformations, one which is termed 'external' or Le-HBsAg and the other 'internal' or Li-HBsAg. In its external conformation the protein attaches the virus to cell receptors and thereby initiating infection. This interaction determines the species specificity and liver tropism. This attachment induces virion internalization predominantly through caveolin-mediated endocytosis. The large envelope protein also assures fusion between virion membrane and endosomal membrane. In its internal conformation the protein plays a role in virion morphogenesis and mediates the contact with the nucleocapsid like a matrix protein. Its function is as follows. The middle envelope protein plays an important role in the budding of the virion. It is involved in the induction of budding in a nucleocapsid independent way. In this process the majority of envelope proteins bud to form subviral lipoprotein particles of 22 nm of diameter that do not contain a nucleocapsid. The protein is Large envelope protein of Hepatitis B virus genotype A1 subtype adw2 (isolate South Africa/84/2001) (HBV-A).